The chain runs to 484 residues: Cysteine desulfurase, mitochondrial (484 aa).

A compositionally biased stretch (low complexity) spans 29–42 (LATSASTSSSTTTS). A disordered region spans residues 29 to 69 (LATSASTSSSTTTSNAETGELHVSTPLDSPSVHPPDGSSIS). Pyridoxal 5'-phosphate is bound by residues 153–154 (AT), Asn233, Gln261, and 281–283 (SSH). Position 284 is an N6-(pyridoxal phosphate)lysine (Lys284). Residue Thr321 participates in pyridoxal 5'-phosphate binding. The active-site Cysteine persulfide intermediate is the Cys408. Residue Cys408 coordinates [2Fe-2S] cluster.

It belongs to the class-V pyridoxal-phosphate-dependent aminotransferase family. NifS/IscS subfamily. Requires pyridoxal 5'-phosphate as cofactor.

It localises to the mitochondrion. It catalyses the reaction (sulfur carrier)-H + L-cysteine = (sulfur carrier)-SH + L-alanine. In terms of biological role, catalyzes the removal of elemental sulfur from cysteine to produce alanine. It supplies the inorganic sulfur for iron-sulfur (Fe-S) clusters. Plays a role in both tRNA-processing and mitochondrial metabolism. Involved in the 2-thio-modification of both 5-carboxymethylaminomethyl-2-thiouridine in mitochondrial tRNAs and 5-methoxycarbonylmethyl-2-thiouridine (mcm5s2U) in cytoplasmic tRNAs. In Candida maltosa (Yeast), this protein is Cysteine desulfurase, mitochondrial.